Reading from the N-terminus, the 44-residue chain is Photosystem I reaction center subunit IX (44 aa).

Residues 9–29 (FMRSAPIVAAIWISLTAGIII) traverse the membrane as a helical segment.

It belongs to the PsaJ family.

Its subcellular location is the cellular thylakoid membrane. May help in the organization of the PsaE and PsaF subunits. This is Photosystem I reaction center subunit IX from Prochlorococcus marinus (strain MIT 9515).